Here is a 1086-residue protein sequence, read N- to C-terminus: Selenocysteine insertion sequence-binding protein 2-like (1086 aa).

Disordered stretches follow at residues 155 to 207, 243 to 386, 615 to 657, 880 to 904, and 919 to 1086; these read GQAF…GPDS, AKGR…SESL, QEDA…SPMA, SDGLEPSEMEKAAPCTHSPPEKPSR, and AAGS…PQST. Residues 193–206 are compositionally biased toward polar residues; it reads NVATQKETSATGPD. Ser276 carries the post-translational modification Phosphoserine. 2 stretches are compositionally biased toward polar residues: residues 294 to 303 and 328 to 344; these read GTMNRLESSG and QAFSRGGRQTEQRNNLQ. Positions 355-370 are enriched in basic and acidic residues; that stretch reads SSERRQNLQKRQDNKH. Over residues 624–657 the composition is skewed to polar residues; the sequence is SDASLSPASQNSPYCMTPVSQGSPASSGIGSPMA. Residues 922 to 931 show a composition bias toward polar residues; sequence SITSAPSQGK. Residues 933–943 show a composition bias toward basic and acidic residues; that stretch reads TGDKDELKPDD. A compositionally biased stretch (polar residues) spans 947 to 957; that stretch reads ASQQSTETGSL. Positions 981-994 are enriched in acidic residues; the sequence is LEEEEDEEEEEEDY. The span at 1004–1022 shows a compositional bias: polar residues; that stretch reads QLNSRIESWVSETQRTMET. The span at 1032–1046 shows a compositional bias: acidic residues; the sequence is SEEDSAEQSGEEAAE.

In terms of biological role, binds SECIS (Sec insertion sequence) elements present on selenocysteine (Sec) protein mRNAs, but does not promote Sec incorporation into selenoproteins. This is Selenocysteine insertion sequence-binding protein 2-like (Secisbp2l) from Mus musculus (Mouse).